The chain runs to 206 residues: ATP phosphoribosyltransferase (206 aa).

This sequence belongs to the ATP phosphoribosyltransferase family. Short subfamily. As to quaternary structure, heteromultimer composed of HisG and HisZ subunits.

The protein localises to the cytoplasm. The catalysed reaction is 1-(5-phospho-beta-D-ribosyl)-ATP + diphosphate = 5-phospho-alpha-D-ribose 1-diphosphate + ATP. It functions in the pathway amino-acid biosynthesis; L-histidine biosynthesis; L-histidine from 5-phospho-alpha-D-ribose 1-diphosphate: step 1/9. Its function is as follows. Catalyzes the condensation of ATP and 5-phosphoribose 1-diphosphate to form N'-(5'-phosphoribosyl)-ATP (PR-ATP). Has a crucial role in the pathway because the rate of histidine biosynthesis seems to be controlled primarily by regulation of HisG enzymatic activity. The protein is ATP phosphoribosyltransferase of Campylobacter curvus (strain 525.92).